The chain runs to 150 residues: MIRILGEGKGSKLLENLKEKLEEIVKKEIGDVHVNVILVSEDEIKELNQQFRGQDRPTDVLTFPLMEEDVYGEIYVCPLIVEENAREFNNTFEKELLEVVIHGILHLAGYDHEFEDKNSKEMFEKQKKYVEEVWGEWRSNPSEDSDPGKR.

Residues His102, His106, and His112 each contribute to the Zn(2+) site.

Belongs to the endoribonuclease YbeY family. Requires Zn(2+) as cofactor.

It localises to the cytoplasm. Single strand-specific metallo-endoribonuclease involved in late-stage 70S ribosome quality control and in maturation of the 3' terminus of the 16S rRNA. This chain is Endoribonuclease YbeY, found in Thermotoga maritima (strain ATCC 43589 / DSM 3109 / JCM 10099 / NBRC 100826 / MSB8).